The primary structure comprises 141 residues: VLSEEDKSHVKAIWGKVAGHLEEYGAEALERMFCAYPQTKIYFPHFDMSHNSAQIRGHGKKVFAALHDAVNHIDDLAGALCRLSDLHAHNLRVDPVNFKFLSQCILVVFGVHHPCSLTPEVHASLDKFLCAVSAMLTSKYR.

Positions 1–141 (VLSEEDKSHV…VSAMLTSKYR (141 aa)) constitute a Globin domain. Residue histidine 58 participates in O2 binding. Residue histidine 87 participates in heme b binding.

It belongs to the globin family. As to quaternary structure, heterotetramer of two alpha chains and two beta chains. Red blood cells.

Functionally, involved in oxygen transport from the lung to the various peripheral tissues. This Caiman crocodilus (Spectacled caiman) protein is Hemoglobin subunit alpha (HBA).